The sequence spans 346 residues: UDP-N-acetylenolpyruvoylglucosamine reductase (346 aa).

The FAD-binding PCMH-type domain occupies 23–194; sequence FDVRAQFACR…TSVTFRLPKV (172 aa). Arg170 is a catalytic residue. Ser246 functions as the Proton donor in the catalytic mechanism. Residue Glu342 is part of the active site.

It belongs to the MurB family. FAD serves as cofactor.

It is found in the cytoplasm. The catalysed reaction is UDP-N-acetyl-alpha-D-muramate + NADP(+) = UDP-N-acetyl-3-O-(1-carboxyvinyl)-alpha-D-glucosamine + NADPH + H(+). It participates in cell wall biogenesis; peptidoglycan biosynthesis. Cell wall formation. The protein is UDP-N-acetylenolpyruvoylglucosamine reductase of Paraburkholderia phytofirmans (strain DSM 17436 / LMG 22146 / PsJN) (Burkholderia phytofirmans).